Reading from the N-terminus, the 541-residue chain is Ankyrin repeat domain-containing protein 13C (541 aa).

A compositionally biased stretch (basic and acidic residues) spans 1 to 20 (MTGEKIRSLRRDHKPSKEDG). The disordered stretch occupies residues 1-53 (MTGEKIRSLRRDHKPSKEDGDVLEPCEEEATAALGGAFTGGRSGPGGSGKGGK). Residues 21–30 (DVLEPCEEEA) show a composition bias toward acidic residues. Residues 37–52 (AFTGGRSGPGGSGKGG) show a composition bias toward gly residues. 3 ANK repeats span residues 111–142 (PSLYPVHECVFKGDVRRLSSLIRTHNIGQKDN), 143–172 (HGNTPLHLAVMLGNKECAHLLLAHNAPVKV), and 176–205 (QGWSPLAEAISYGDRQMITALLRKLKQQSR). Serine 411 is subject to Phosphoserine.

It localises to the endoplasmic reticulum membrane. In terms of biological role, acts as a molecular chaperone for G protein-coupled receptors, regulating their biogenesis and exit from the ER. In Mus musculus (Mouse), this protein is Ankyrin repeat domain-containing protein 13C (Ankrd13c).